A 214-amino-acid chain; its full sequence is Fruiting body protein SC14 (214 aa).

A signal peptide spans 1 to 18; it reads MKLNIAILLAALAATASA. Asparagine 61 and asparagine 144 each carry an N-linked (GlcNAc...) asparagine glycan. In terms of domain architecture, SCP spans 72–195; the sequence is LTAHNDERAQ…KSLWYYVCNY (124 aa).

It belongs to the CRISP family.

The protein resides in the secreted. The polypeptide is Fruiting body protein SC14 (SC14) (Schizophyllum commune (Split gill fungus)).